The primary structure comprises 376 residues: Lipoyl synthase 2, mitochondrial (376 aa).

[4Fe-4S] cluster is bound by residues Cys-109, Cys-114, Cys-120, Cys-140, Cys-144, Cys-147, and Ser-356. A Radical SAM core domain is found at 125–345 (ETGTATATIM…QTLGMEMGFR (221 aa)).

Belongs to the radical SAM superfamily. Lipoyl synthase family. It depends on [4Fe-4S] cluster as a cofactor.

Its subcellular location is the mitochondrion. The enzyme catalyses [[Fe-S] cluster scaffold protein carrying a second [4Fe-4S](2+) cluster] + N(6)-octanoyl-L-lysyl-[protein] + 2 oxidized [2Fe-2S]-[ferredoxin] + 2 S-adenosyl-L-methionine + 4 H(+) = [[Fe-S] cluster scaffold protein] + N(6)-[(R)-dihydrolipoyl]-L-lysyl-[protein] + 4 Fe(3+) + 2 hydrogen sulfide + 2 5'-deoxyadenosine + 2 L-methionine + 2 reduced [2Fe-2S]-[ferredoxin]. The protein operates within protein modification; protein lipoylation via endogenous pathway; protein N(6)-(lipoyl)lysine from octanoyl-[acyl-carrier-protein]: step 2/2. Catalyzes the radical-mediated insertion of two sulfur atoms into the C-6 and C-8 positions of the octanoyl moiety bound to the lipoyl domains of lipoate-dependent enzymes, thereby converting the octanoylated domains into lipoylated derivatives. This Pisum sativum (Garden pea) protein is Lipoyl synthase 2, mitochondrial.